The chain runs to 716 residues: Protein C-mannosyl-transferase DPY19L3 (716 aa).

Residues 1–43 (MMYIRQRKETKPIEVSEDFPSPKEDVKLEKKLPSGCASGRFWK) are Cytoplasmic-facing. A helical membrane pass occupies residues 44-64 (ILSSAVGGTVALCIGLLTSVY). The Lumenal segment spans residues 65-154 (LATLHENDLW…RVLPIQKYLE (90 aa)). N118 is a glycosylation site (N-linked (GlcNAc...) asparagine). Residues 155-182 (PVYFYIYTLFGLQAVYVTALYITSWLLS) form a helical membrane-spanning segment. The Cytoplasmic portion of the chain corresponds to 183 to 184 (GT). Positions 185–197 (WLSGLLAALWYVT) form an intramembrane region, name=3. At 198–215 (NRIDTTRVEFTIPLRENW) the chain is on the cytoplasmic side. Residues 216–230 (ALPFFAIQIAAITYF) constitute an intramembrane region (name=4). Residues 231–239 (LRPNLQPLS) lie on the Cytoplasmic side of the membrane. The chain crosses the membrane as a helical span at residues 240–256 (ERLTLLAIFVSTFLFSL). Over 257–262 (TWQFNQ) the chain is Lumenal. Residues 263–279 (FMMLLQALVLFILDSLD) form a helical membrane-spanning segment. Residues 280–289 (MLPAMKATWL) are Cytoplasmic-facing. The chain crosses the membrane as a helical span at residues 290–306 (YGIQISCLLLVCTLQFF). At 307 to 308 (NS) the chain is on the lumenal side. The helical transmembrane segment at 309–323 (MILGSLLISFNLSVL) threads the bilayer. At 324-338 (IVRKLQKNLKTGSFL) the chain is on the cytoplasmic side. Residues 339 to 359 (TRIWKLLLHLLLVFCLTLFLN) traverse the membrane as a helical segment. The Lumenal segment spans residues 360–414 (NIIKKVLNLKSDEHIFKFLKAKFGFGATRDFDANLYLCEEAFGLLPLNTFQRLSE). Residues 415 to 437 (TLLFYAYMFVLVVTVVTASVVAF) form a helical membrane-spanning segment. Over 438–465 (HNLSDSTSLKSMDQTRKRAVDLKPEAAY) the chain is Cytoplasmic. The chain crosses the membrane as a helical span at residues 466 to 485 (NLIHTILFGVLALSTMRMKY). At 486 to 487 (LW) the chain is on the lumenal side. Residues 488 to 499 (TSHMCVFASFGL) traverse the membrane as a helical segment. The Cytoplasmic segment spans residues 500-522 (CSSEVWELLLRLVHLCNPKRIWV). A helical membrane pass occupies residues 523–539 (LRYLVPVLTLLYLCYKS). At 540–716 (WPGVMDELSE…FHVYKLSRNK (177 aa)) the chain is on the lumenal side. N704 carries an N-linked (GlcNAc...) asparagine glycan.

Belongs to the dpy-19 family.

It localises to the endoplasmic reticulum membrane. It catalyses the reaction L-tryptophyl-[protein] + a di-trans,poly-cis-dolichyl beta-D-mannosyl phosphate = C-alpha-D-mannosyl-L-tryptophyl-[protein] + a di-trans,poly-cis-dolichyl phosphate + H(+). Its pathway is protein modification; protein glycosylation. In terms of biological role, C-mannosyltransferase that mediates C-mannosylation of tryptophan residues on target proteins. The reaction occurs on the luminal side of the endoplasmic reticulum and involves the transfer of a mannose unit from a dolichylphosphate mannose (Dol-P-Man) donor to an acceptor protein containing a WxxW or WxxC consensus sequence. C-mannosylates RSPO1, a Wnt signaling regulator, preferentially at the first Trp residue in the sequence WxxW. C-mannosylates the netrin receptor UNC5A, preferentially at the third tryptophan of WxxWxxWxxC sequence. This Mus musculus (Mouse) protein is Protein C-mannosyl-transferase DPY19L3 (Dpy19l3).